Here is a 374-residue protein sequence, read N- to C-terminus: Acetylxylan esterase (374 aa).

An N-terminal signal peptide occupies residues 1–22; the sequence is MVFSPRLSAFVALVALTNAATA. Positions 23 to 57 constitute a CBM1 domain; sequence VPMYGQCGGSGYTGPTQCDPGLVCVKLNDWYSQCQ. The ser/Thr/Pro-rich linker stretch occupies residues 58 to 99; that stretch reads SGGAQPPVTTTSSPPVTVSPPPSTTTVAPPVATGPPAPEIPA. Residues 60–86 form a disordered region; that stretch reads GAQPPVTTTSSPPVTVSPPPSTTTVAP. Residues 63–73 are compositionally biased toward low complexity; the sequence is PPVTTTSSPPV. The tract at residues 100-374 is catalytic; sequence GQLTQLRSFG…EVVAMDFFGL (275 aa). Residue Asn114 is glycosylated (N-linked (GlcNAc...) asparagine). Residue Ser219 is the Charge relay system of the active site. A glycan (N-linked (GlcNAc...) asparagine) is linked at Asn320.

The protein belongs to the carbohydrate esterase 1 (CE1) family. AxeA subfamily. In terms of assembly, monomer. In terms of processing, glycosylated.

It is found in the secreted. It carries out the reaction Deacetylation of xylans and xylo-oligosaccharides.. The protein operates within glycan degradation; xylan degradation. Functionally, acetylxylan esterase involved in the hydrolysis of xylan, a major structural heterogeneous polysaccharide found in plant biomass representing the second most abundant polysaccharide in the biosphere, after cellulose. Degrades acetylated xylans by cleaving acetyl side groups from the hetero-xylan backbone. The protein is Acetylxylan esterase of Coprinopsis cinerea (strain Okayama-7 / 130 / ATCC MYA-4618 / FGSC 9003) (Inky cap fungus).